We begin with the raw amino-acid sequence, 451 residues long: Phosphoglucosamine mutase (451 aa).

Ser-102 serves as the catalytic Phosphoserine intermediate. The Mg(2+) site is built by Ser-102, Asp-242, Asp-244, and Asp-246. Ser-102 bears the Phosphoserine mark.

The protein belongs to the phosphohexose mutase family. Mg(2+) serves as cofactor. In terms of processing, activated by phosphorylation.

It carries out the reaction alpha-D-glucosamine 1-phosphate = D-glucosamine 6-phosphate. Catalyzes the conversion of glucosamine-6-phosphate to glucosamine-1-phosphate. The protein is Phosphoglucosamine mutase of Staphylococcus aureus (strain Mu3 / ATCC 700698).